A 240-amino-acid chain; its full sequence is Ribonuclease 3 (240 aa).

An RNase III domain is found at 10–136 (VREFQETVGV…LIGAVYLDRG (127 aa)). Mg(2+) is bound at residue Glu49. Asp53 is an active-site residue. Residues Asp122 and Glu125 each coordinate Mg(2+). Residue Glu125 is part of the active site. One can recognise a DRBM domain in the interval 163–231 (DWKTSLQELT…AESAWKAIRA (69 aa)). Residues 205–240 (TYGSGEGRSKKEAEQQAAESAWKAIRAATEKAKQES) form a disordered region. Positions 219–228 (QQAAESAWKA) are enriched in low complexity.

Belongs to the ribonuclease III family. In terms of assembly, homodimer. It depends on Mg(2+) as a cofactor.

The protein localises to the cytoplasm. The enzyme catalyses Endonucleolytic cleavage to 5'-phosphomonoester.. Its function is as follows. Digests double-stranded RNA. Involved in the processing of primary rRNA transcript to yield the immediate precursors to the large and small rRNAs (23S and 16S). Processes some mRNAs, and tRNAs when they are encoded in the rRNA operon. Processes pre-crRNA and tracrRNA of type II CRISPR loci if present in the organism. This is Ribonuclease 3 from Thermobifida fusca (strain YX).